The sequence spans 675 residues: TOM1-like protein 9 (675 aa).

The VHS domain occupies 9 to 138; the sequence is ATSEMLIGPD…ELLRAGAVFP (130 aa). 5 disordered regions span residues 144-181, 270-322, 371-524, 542-561, and 622-675; these read SAPV…EPEF, LPGT…QLAL, FSDN…YAQM, QNGV…GYQP, and RDQT…AGTM. In terms of domain architecture, GAT spans 180-268; that stretch reads EFPTLSLSEI…VLTNYEAIAS (89 aa). Composition is skewed to polar residues over residues 299–317 and 372–435; these read GDSS…NGVL and SDNT…GQGV. The span at 436–451 shows a compositional bias: low complexity; sequence SSPWSSQPAQQPVQPS. Polar residues-rich tracts occupy residues 470–481 and 488–524; these read QDYSPSAESGSP and PTQT…YAQM. Residues 646 to 661 are compositionally biased toward basic and acidic residues; the sequence is NKPEDKLFGDLVDISK.

Belongs to the TOM1 family. As to quaternary structure, interacts with ELC/VPS23A and ELCL/VPS23B. In terms of tissue distribution, ubiquitously expressed.

It is found in the cytoplasm. The protein localises to the membrane. Functionally, might contribute to the loading of the ESCRT machinery. This Arabidopsis thaliana (Mouse-ear cress) protein is TOM1-like protein 9.